The sequence spans 2164 residues: Hemagglutinin A (2164 aa).

Residues 1 to 25 (MRKLNSLFSLAVLLSLLCWGQTAAA) form the signal peptide. 3 peptidase C25-like regions span residues 26–539 (QGGP…TPPP), 540–991 (GGSS…TPPP), and 992–1443 (GGTS…TPPP). 2 disordered regions span residues 493-512 (WDAP…LSES) and 520-541 (SWKT…PPGG). Over residues 496–508 (PNGTPNPNPGTTT) the composition is skewed to low complexity.

It belongs to the peptidase C25 family.

Functionally, agglutinates erythrocytes. The chain is Hemagglutinin A (hagA) from Porphyromonas gingivalis (strain ATCC BAA-308 / W83).